Reading from the N-terminus, the 314-residue chain is Homoserine O-acetyltransferase (314 aa).

Cys142 (acyl-thioester intermediate) is an active-site residue. Residues Lys163 and Ser192 each contribute to the substrate site. The active-site Proton acceptor is the His235. Glu237 is an active-site residue. Arg249 is a binding site for substrate.

Belongs to the MetA family.

The protein resides in the cytoplasm. The enzyme catalyses L-homoserine + acetyl-CoA = O-acetyl-L-homoserine + CoA. It participates in amino-acid biosynthesis; L-methionine biosynthesis via de novo pathway; O-acetyl-L-homoserine from L-homoserine: step 1/1. Its function is as follows. Transfers an acetyl group from acetyl-CoA to L-homoserine, forming acetyl-L-homoserine. The chain is Homoserine O-acetyltransferase from Streptococcus pneumoniae (strain Taiwan19F-14).